Reading from the N-terminus, the 295-residue chain is G1/S-specific cyclin-D1 (295 aa).

One can recognise a Cyclin N-terminal domain in the interval leucine 28 to leucine 152. Residues glutamine 264–isoleucine 295 are disordered. Residue lysine 270 forms a Glycyl lysine isopeptide (Lys-Gly) (interchain with G-Cter in ubiquitin) linkage. The segment covering glutamate 273–aspartate 282 has biased composition (acidic residues). Position 286 is a phosphothreonine (threonine 286).

This sequence belongs to the cyclin family. Cyclin D subfamily. As to quaternary structure, interacts with either CDK4 or CDK6 protein kinase to form a serine/threonine kinase holoenzyme complex. The cyclin subunit imparts substrate specificity to the complex. Component of the ternary complex CCND1/CDK4/CDKN1B required for nuclear translocation and modulation of CDK4-mediated kinase activity. Interacts directly with CDKN1B. Can form similar complexes with either CDKN1A or CDKN2A. Interacts with UHRF2; the interaction ubiquitinates CCND1 and appears to occur independently of phosphorylation. Interacts with USP2. Interacts (via cyclin N-terminal domain) with INSM1 (via N-terminal region); the interaction competes with the binding of CCND1 to CDK4 during cell cycle progression and inhibits CDK4 activity. Interacts with CDK4; the interaction is prevented with the binding of CCND1 to INSM1 during cell cycle progression. Phosphorylation at Thr-286 by MAP kinases is required for ubiquitination and degradation by the DCX(AMBRA1) complex. It also plays an essential role for recognition by the FBXO31 component of SCF (SKP1-cullin-F-box) protein ligase complex following DNA damage. Post-translationally, ubiquitinated at Lys-270 by the DCX(AMBRA1) complex during the transition from G1 to S cell phase, leading to its degradation: ubiquitination is dependent on Thr-286 phosphorylation. The DCX(AMBRA1) complex represents the major regulator of CCND1 stability during the G1/S transition. Also ubiquitinated by the SCF(FBXO4) and Cul7-RING(FBXW8) ubiquitin-protein ligase complexes. Following DNA damage it is ubiquitinated by the SCF(FBXO31) protein ligase complex. SCF(FBXO31) ubiquitination is dependent on Thr-286 phosphorylation. Ubiquitinated also by UHRF2 apparently in a phosphorylation-independent manner. Ubiquitination leads to its degradation and G1 arrest. Deubiquitinated by USP2; leading to its stabilization.

It is found in the nucleus. Its subcellular location is the cytoplasm. The protein localises to the nucleus membrane. Regulatory component of the cyclin D1-CDK4 (DC) complex that phosphorylates and inhibits members of the retinoblastoma (RB) protein family including RB1 and regulates the cell-cycle during G(1)/S transition. Phosphorylation of RB1 allows dissociation of the transcription factor E2F from the RB/E2F complex and the subsequent transcription of E2F target genes which are responsible for the progression through the G(1) phase. Hypophosphorylates RB1 in early G(1) phase. Cyclin D-CDK4 complexes are major integrators of various mitogenenic and antimitogenic signals. Also a substrate for SMAD3, phosphorylating SMAD3 in a cell-cycle-dependent manner and repressing its transcriptional activity. Component of the ternary complex, cyclin D1/CDK4/CDKN1B, required for nuclear translocation and activity of the cyclin D-CDK4 complex. Exhibits transcriptional corepressor activity with INSM1 on the NEUROD1 and INS promoters in a cell cycle-independent manner. In Canis lupus familiaris (Dog), this protein is G1/S-specific cyclin-D1 (CCND1).